Reading from the N-terminus, the 1107-residue chain is Unconventional myosin-Ib (1107 aa).

A Myosin motor domain is found at 15–701 (IGVGDMVLLE…TLFQLEDLRK (687 aa)). Position 60 is a phosphoserine (Ser-60). 108–115 (GESGAGKT) contacts ATP. A Glycyl lysine isopeptide (Lys-Gly) (interchain with G-Cter in SUMO1); alternate cross-link involves residue Lys-287. Residue Lys-287 forms a Glycyl lysine isopeptide (Lys-Gly) (interchain with G-Cter in SUMO2); alternate linkage. The segment at 592 to 599 (YIRCIKPN) is actin-binding. IQ domains are found at residues 704–727 (LEDLATLIQKIYRGWKCRTHFLLM), 728–749 (KRSQVVIAAWYRRYAQQKRYQQ), 750–778 (IKSSALVIQSYIRGWKARKILRELKHQKR), 780–807 (KEAATTIAAYWHGTQARRELKRLKEEAR), and 808–837 (RKHAVAVIWAYWLGLKVRREYRKFFRANAG). A TH1 domain is found at 923-1107 (KALYPSSVGQ…NNRLLEVAVP (185 aa)).

The protein belongs to the TRAFAC class myosin-kinesin ATPase superfamily. Myosin family. In terms of tissue distribution, prominent expression is seen in the brain, lung and liver. It is also expressed in the heart and testis. A high level expression is seen in virtually all neurons (but not glia) in the postnatal and adult mouse brain and in neuroblasts of the cerebellar external granular layer.

Functionally, motor protein that may participate in process critical to neuronal development and function such as cell migration, neurite outgrowth and vesicular transport. The polypeptide is Unconventional myosin-Ib (Myo1b) (Mus musculus (Mouse)).